The primary structure comprises 459 residues: tRNA modification GTPase MnmE (459 aa).

Residues Arg-22, Glu-85, and Arg-124 each coordinate (6S)-5-formyl-5,6,7,8-tetrahydrofolate. In terms of domain architecture, TrmE-type G spans 221 to 380 (GLSTVIVGKP…LEIQIRDLFF (160 aa)). Residue Asn-231 coordinates K(+). GTP is bound by residues 231–236 (NVGKSS), 250–256 (TEVAGTT), and 275–278 (DTAG). Residue Ser-235 coordinates Mg(2+). 3 residues coordinate K(+): Thr-250, Val-252, and Thr-255. Thr-256 serves as a coordination point for Mg(2+). Residue Lys-459 coordinates (6S)-5-formyl-5,6,7,8-tetrahydrofolate.

The protein belongs to the TRAFAC class TrmE-Era-EngA-EngB-Septin-like GTPase superfamily. TrmE GTPase family. As to quaternary structure, homodimer. Heterotetramer of two MnmE and two MnmG subunits. It depends on K(+) as a cofactor.

Its subcellular location is the cytoplasm. Exhibits a very high intrinsic GTPase hydrolysis rate. Involved in the addition of a carboxymethylaminomethyl (cmnm) group at the wobble position (U34) of certain tRNAs, forming tRNA-cmnm(5)s(2)U34. The protein is tRNA modification GTPase MnmE of Staphylococcus aureus (strain MW2).